The chain runs to 263 residues: MIEKVDYEKVTGLVNSTESFGSVDGPGIRFVVFMQGCQMRCQYCHNPDTWAMKNDRATERTAGDVFKEALRFKDFWGDTGGITVSGGEATLQMDFLIALFSLAKEKGIHTTLDTCALTFRNTPKYLEKYEKLMAVTDLVLLDIKEINPDQHKIVTGHSNKTILACARYLSDIGKPVWIRHVLVPGLTDRDEDLIKLGEYVKTLKNVQRFEILPYHTMGEFKWRELGIPYPLEGVKPPTPDRVRNAKKLMHTETYEEYKKRINH.

One can recognise a Radical SAM core domain in the interval 23-260; it reads VDGPGIRFVV…TETYEEYKKR (238 aa). 3 residues coordinate [4Fe-4S] cluster: Cys-37, Cys-41, and Cys-44. Residues 43–45, Gly-87, 142–144, and His-215 contribute to the S-adenosyl-L-methionine site; these read YCH and DIK.

It belongs to the organic radical-activating enzymes family. It depends on [4Fe-4S] cluster as a cofactor.

The protein resides in the cytoplasm. The catalysed reaction is glycyl-[formate C-acetyltransferase] + reduced [flavodoxin] + S-adenosyl-L-methionine = glycin-2-yl radical-[formate C-acetyltransferase] + semiquinone [flavodoxin] + 5'-deoxyadenosine + L-methionine + H(+). Its function is as follows. Activation of pyruvate formate-lyase under anaerobic conditions by generation of an organic free radical, using S-adenosylmethionine and reduced flavodoxin as cosubstrates to produce 5'-deoxy-adenosine. The sequence is that of Pyruvate formate-lyase-activating enzyme (act) from Streptococcus mutans serotype c (strain ATCC 700610 / UA159).